The primary structure comprises 165 residues: Protein C2-DOMAIN ABA-RELATED 7 (165 aa).

An N-acetylmethionine modification is found at methionine 1. Positions 1–106 (MEELVGLLRI…HKMGLQELPD (106 aa)) constitute a C2 domain. The Ca(2+) site is built by arginine 21, aspartate 22, aspartate 27, aspartate 73, lysine 74, aspartate 75, and aspartate 81.

It belongs to the plant CAR protein family. Binds to PYR/PYL/RCAR abscisic acid intracellular receptors in an ABA-independent manner, both at the plasma membrane and in the nucleus.

The protein resides in the cell membrane. It localises to the nucleus. Stimulates the GTPase/ATPase activities of Obg-like ATPases. Mediates the transient calcium-dependent interaction of PYR/PYL/RCAR abscisic acid (ABA) receptors with the plasma membrane and thus regulates ABA sensitivity. The polypeptide is Protein C2-DOMAIN ABA-RELATED 7 (Arabidopsis thaliana (Mouse-ear cress)).